The following is a 268-amino-acid chain: Glutamate racemase (268 aa).

Residues 9–10 and 41–42 contribute to the substrate site; these read DS and YG. C73 acts as the Proton donor/acceptor in catalysis. A substrate-binding site is contributed by 74 to 75; that stretch reads NS. C183 (proton donor/acceptor) is an active-site residue. 184–185 serves as a coordination point for substrate; the sequence is TH.

This sequence belongs to the aspartate/glutamate racemases family.

The enzyme catalyses L-glutamate = D-glutamate. It participates in cell wall biogenesis; peptidoglycan biosynthesis. In terms of biological role, provides the (R)-glutamate required for cell wall biosynthesis. This is Glutamate racemase from Shewanella pealeana (strain ATCC 700345 / ANG-SQ1).